Reading from the N-terminus, the 658-residue chain is UvrABC system protein B (658 aa).

Residues 26 to 414 (DGLRRGVKHQ…PGVVEQIIRP (389 aa)) enclose the Helicase ATP-binding domain. 39–46 (GATGTGKT) contributes to the ATP binding site. Residues 92 to 115 (YYDYYQPEAYVPQTDTYIEKDAKI) carry the Beta-hairpin motif. The Helicase C-terminal domain occupies 430–596 (QIDDLIGEIR…TVKKEIRDVI (167 aa)). One can recognise a UVR domain in the interval 622 to 657 (EELIRTLEAEMKEAAKALDFERAAQLRDIIFELKAE).

It belongs to the UvrB family. Forms a heterotetramer with UvrA during the search for lesions. Interacts with UvrC in an incision complex.

The protein localises to the cytoplasm. Functionally, the UvrABC repair system catalyzes the recognition and processing of DNA lesions. A damage recognition complex composed of 2 UvrA and 2 UvrB subunits scans DNA for abnormalities. Upon binding of the UvrA(2)B(2) complex to a putative damaged site, the DNA wraps around one UvrB monomer. DNA wrap is dependent on ATP binding by UvrB and probably causes local melting of the DNA helix, facilitating insertion of UvrB beta-hairpin between the DNA strands. Then UvrB probes one DNA strand for the presence of a lesion. If a lesion is found the UvrA subunits dissociate and the UvrB-DNA preincision complex is formed. This complex is subsequently bound by UvrC and the second UvrB is released. If no lesion is found, the DNA wraps around the other UvrB subunit that will check the other stand for damage. The chain is UvrABC system protein B from Geobacillus kaustophilus (strain HTA426).